Reading from the N-terminus, the 124-residue chain is Holo-[acyl-carrier-protein] synthase (124 aa).

Residues Asp8 and Glu56 each contribute to the Mg(2+) site.

It belongs to the P-Pant transferase superfamily. AcpS family. The cofactor is Mg(2+).

Its subcellular location is the cytoplasm. It carries out the reaction apo-[ACP] + CoA = holo-[ACP] + adenosine 3',5'-bisphosphate + H(+). Its function is as follows. Transfers the 4'-phosphopantetheine moiety from coenzyme A to a Ser of acyl-carrier-protein. This is Holo-[acyl-carrier-protein] synthase from Maridesulfovibrio salexigens (strain ATCC 14822 / DSM 2638 / NCIMB 8403 / VKM B-1763) (Desulfovibrio salexigens).